Consider the following 308-residue polypeptide: Acyl transferase (308 aa).

Catalysis depends on charge relay system residues serine 116, aspartate 213, and histidine 243.

The protein belongs to the LuxD family.

It functions in the pathway lipid metabolism; fatty acid reduction for biolumincescence. Functionally, acyl transferase is part of the fatty acid reductase system required for aldehyde biosynthesis; it produces fatty acids for the luminescent reaction. The sequence is that of Acyl transferase from Shewanella hanedai (Alteromonas hanedai).